The chain runs to 428 residues: Adenylosuccinate synthetase (428 aa).

Residues 12 to 18 (GDEGKGK) and 40 to 42 (GHT) each bind GTP. Asp-13 serves as the catalytic Proton acceptor. Residues Asp-13 and Gly-40 each contribute to the Mg(2+) site. IMP contacts are provided by residues 13 to 16 (DEGK), 38 to 41 (NAGH), Thr-130, Arg-144, Gln-225, Thr-240, and Arg-304. His-41 functions as the Proton donor in the catalytic mechanism. 300–306 (VTTGRSR) provides a ligand contact to substrate. GTP is bound by residues Arg-306, 332-334 (KID), and 414-416 (GVG).

This sequence belongs to the adenylosuccinate synthetase family. In terms of assembly, homodimer. Requires Mg(2+) as cofactor.

The protein resides in the cytoplasm. The catalysed reaction is IMP + L-aspartate + GTP = N(6)-(1,2-dicarboxyethyl)-AMP + GDP + phosphate + 2 H(+). Its pathway is purine metabolism; AMP biosynthesis via de novo pathway; AMP from IMP: step 1/2. In terms of biological role, plays an important role in the de novo pathway of purine nucleotide biosynthesis. Catalyzes the first committed step in the biosynthesis of AMP from IMP. The protein is Adenylosuccinate synthetase of Clostridium botulinum (strain Eklund 17B / Type B).